Here is a 110-residue protein sequence, read N- to C-terminus: Holo-[acyl-carrier-protein] synthase (110 aa).

2 residues coordinate Mg(2+): Asp8 and Glu54.

It belongs to the P-Pant transferase superfamily. AcpS family. Mg(2+) serves as cofactor.

The protein localises to the cytoplasm. The catalysed reaction is apo-[ACP] + CoA = holo-[ACP] + adenosine 3',5'-bisphosphate + H(+). In terms of biological role, transfers the 4'-phosphopantetheine moiety from coenzyme A to a Ser of acyl-carrier-protein. This Mycoplasma mycoides subsp. mycoides SC (strain CCUG 32753 / NCTC 10114 / PG1) protein is Holo-[acyl-carrier-protein] synthase.